We begin with the raw amino-acid sequence, 292 residues long: Malectin (292 aa).

Positions 1–28 are cleaved as a signal peptide; sequence MLGAWAVEGTAVALLRLLLLLLPPAIRG. The Lumenal segment spans residues 29 to 269; sequence PGLGVAGVAG…TPNPYASDNS (241 aa). Positions 82, 104, 131, 132, and 201 each coordinate a carbohydrate. Positions 221 to 265 are disordered; the sequence is LQPHPGLEKKEEEEEEEEYDEGSNLKKQTNKNRVQSGPRTPNPYA. A compositionally biased stretch (acidic residues) spans 231-241; the sequence is EEEEEEEEYDE. The span at 245-265 shows a compositional bias: polar residues; the sequence is LKKQTNKNRVQSGPRTPNPYA. N-linked (GlcNAc...) asparagine glycosylation is present at N268. The helical transmembrane segment at 270–290 threads the bilayer; it reads SLMFPILVAFGVFIPTLFCLC. The Cytoplasmic segment spans residues 291–292; it reads RL.

This sequence belongs to the malectin family. Interacts with the oligosaccharyltransferase (OST) complex.

The protein resides in the endoplasmic reticulum membrane. Its function is as follows. Carbohydrate-binding protein with a strong ligand preference for Glc2-N-glycan. May play a role in the early steps of protein N-glycosylation. The sequence is that of Malectin from Homo sapiens (Human).